Here is a 159-residue protein sequence, read N- to C-terminus: Outer envelope pore protein 16-3, chloroplastic/mitochondrial (159 aa).

The residue at position 1 (methionine 1) is an N-acetylmethionine. The interval 1 to 65 (MDPAEMRYLE…IRTLKMMGTH (65 aa)) is contains beta strands. The next 3 helical transmembrane spans lie at 24–40 (ITGF…LATW), 62–79 (MGTH…YIGV), and 92–109 (FYNG…VLGY).

It belongs to the Tim17/Tim22/Tim23 family. Plastid outer envelope porin OEP16 (TC 1.B.30) subfamily. In terms of assembly, homodimer and oligomers in membrane. Part of both the NADH-ubiquinone oxidoreductase complex I and of the TIM17:23 complex. Interacts with TIM23-2.

The protein resides in the plastid. It localises to the chloroplast outer membrane. It is found in the mitochondrion outer membrane. Its subcellular location is the mitochondrion inner membrane. Functionally, voltage-dependent high-conductance channel with a slight cation-selectivity; selective for amino acids but excludes triosephosphates or uncharged sugars. Non-essential amino acid-selective channel protein and translocation pore for NADPH:protochlorophyllide oxidoreductase A (PORA) and possibly PORB. The sequence is that of Outer envelope pore protein 16-3, chloroplastic/mitochondrial (OEP163) from Arabidopsis thaliana (Mouse-ear cress).